The chain runs to 214 residues: MDKTVADLRKDYTLEGLSELEVDLNPFIQFKKWFDQALAGQLPEPNAMTLATVTPDGKPSARMVLLKDFDERGFAFFTNYNSRKGQELAENPLAALVFWWAELERQVRICGYVEKVSETESDQYFDTRPPNSRLGAWVSNQSEVIESREVLERRMQEFYSKYENQEIPRPPHWGGLRVIPTEIEFWQGRSSRLHDRLLYSRLDNGTWKIDRLSP.

Residues 9 to 12 (RKDY) and Lys67 each bind substrate. Residues 62–67 (RMVLLK), 77–78 (FT), Arg83, Lys84, and Gln106 contribute to the FMN site. Substrate-binding residues include Tyr124, Arg128, and Ser132. Residues 141-142 (QS) and Trp186 each bind FMN. 192–194 (RLH) serves as a coordination point for substrate. Arg196 contacts FMN.

It belongs to the pyridoxamine 5'-phosphate oxidase family. As to quaternary structure, homodimer. FMN serves as cofactor.

The catalysed reaction is pyridoxamine 5'-phosphate + O2 + H2O = pyridoxal 5'-phosphate + H2O2 + NH4(+). It carries out the reaction pyridoxine 5'-phosphate + O2 = pyridoxal 5'-phosphate + H2O2. The protein operates within cofactor metabolism; pyridoxal 5'-phosphate salvage; pyridoxal 5'-phosphate from pyridoxamine 5'-phosphate: step 1/1. Its pathway is cofactor metabolism; pyridoxal 5'-phosphate salvage; pyridoxal 5'-phosphate from pyridoxine 5'-phosphate: step 1/1. In terms of biological role, catalyzes the oxidation of either pyridoxine 5'-phosphate (PNP) or pyridoxamine 5'-phosphate (PMP) into pyridoxal 5'-phosphate (PLP). The sequence is that of Pyridoxine/pyridoxamine 5'-phosphate oxidase from Nostoc punctiforme (strain ATCC 29133 / PCC 73102).